A 697-amino-acid chain; its full sequence is Potassium-transporting ATPase ATP-binding subunit (697 aa).

Helical transmembrane passes span 55–75 (PIMFVVEIGFIITFILSFLPS), 79–99 (SIPGWFNITVSLILLFTVLFA), 245–265 (LTLIFLIVVVTLPIFTNYLGF), and 271–291 (VLVALLVCLIPTTIGGLLSAI). The 4-aspartylphosphate intermediate role is filled by Asp324. Residues Asp361, Glu365, 393-400 (FKAETRMS), and Lys412 each bind ATP. The Mg(2+) site is built by Asp535 and Asp539. A run of 3 helical transmembrane segments spans residues 605 to 625 (FAIIPAMFTLAIPQMEALNIM), 633 to 653 (AILSALIFNAVIIPLLIPLAM), and 677 to 697 (GGVIVPFIGIKVIDIIVGLFI).

This sequence belongs to the cation transport ATPase (P-type) (TC 3.A.3) family. Type IA subfamily. The system is composed of three essential subunits: KdpA, KdpB and KdpC.

The protein resides in the cell membrane. The enzyme catalyses K(+)(out) + ATP + H2O = K(+)(in) + ADP + phosphate + H(+). In terms of biological role, part of the high-affinity ATP-driven potassium transport (or Kdp) system, which catalyzes the hydrolysis of ATP coupled with the electrogenic transport of potassium into the cytoplasm. This subunit is responsible for energy coupling to the transport system and for the release of the potassium ions to the cytoplasm. The sequence is that of Potassium-transporting ATPase ATP-binding subunit from Bacillus cereus (strain G9842).